The following is a 31-amino-acid chain: Cyclotide vpub-B (31 aa).

The cyclopeptide (Gly-Asn) cross-link spans Gly1 to Asn31. Intrachain disulfides connect Cys5–Cys21, Cys9–Cys23, and Cys14–Cys28.

This sequence belongs to the cyclotide family. Bracelet subfamily. In terms of processing, this is a cyclic peptide.

Probably participates in a plant defense mechanism. The polypeptide is Cyclotide vpub-B (Viola pubescens (Downy yellow violet)).